Here is a 338-residue protein sequence, read N- to C-terminus: tRNA N6-adenosine threonylcarbamoyltransferase (338 aa).

Fe cation-binding residues include histidine 111 and histidine 115. Substrate contacts are provided by residues 134–138 (LVSGG), aspartate 167, glycine 180, and asparagine 272. Position 300 (aspartate 300) interacts with Fe cation.

Belongs to the KAE1 / TsaD family. Requires Fe(2+) as cofactor.

It is found in the cytoplasm. The catalysed reaction is L-threonylcarbamoyladenylate + adenosine(37) in tRNA = N(6)-L-threonylcarbamoyladenosine(37) in tRNA + AMP + H(+). In terms of biological role, required for the formation of a threonylcarbamoyl group on adenosine at position 37 (t(6)A37) in tRNAs that read codons beginning with adenine. Is involved in the transfer of the threonylcarbamoyl moiety of threonylcarbamoyl-AMP (TC-AMP) to the N6 group of A37, together with TsaE and TsaB. TsaD likely plays a direct catalytic role in this reaction. This is tRNA N6-adenosine threonylcarbamoyltransferase from Vibrio parahaemolyticus serotype O3:K6 (strain RIMD 2210633).